The primary structure comprises 5635 residues: Hemicentin-1 (5635 aa).

The N-terminal stretch at 1–21 is a signal peptide; the sequence is MISWEVVHTVFLFALLYSSLA. Residues 41-216 form the VWFA domain; it reads TLAFVFDVTG…EVLKWVEEAV (176 aa). N-linked (GlcNAc...) asparagine glycans are attached at residues Asn-349 and Asn-390. Ig-like C2-type domains are found at residues 431-517, 520-607, 612-697, 702-788, 793-883, 890-976, 981-1067, 1072-1166, 1171-1255, 1262-1354, 1358-1447, 1452-1541, 1546-1634, 1638-1724, 1733-1821, 1826-1914, 1919-2007, 2012-2097, 2104-2190, 2195-2285, 2290-2379, 2384-2470, 2478-2564, 2571-2662, 2666-2763, 2766-2864, 2868-2959, 2964-3051, 3056-3146, 3151-3240, 3245-3335, 3340-3429, 3434-3516, 3527-3615, 3620-3708, 3713-3797, 3804-3892, 3897-3983, 3988-4076, 4079-4164, 4169-4255, 4260-4344, 4348-4435, and 4440-4527; these read PKVT…FDVS, PPVI…VFLT, PKVT…STLR, PKLM…ITLD, PVFI…TTVT, PLIG…TSVV, PTIQ…VQLT, PRVF…VKLN, PKIQ…TEIT, PTVE…YNLK, PPVI…FNID, PTII…IKLT, PSIK…FHVD, PPMI…KEIK, PAIE…FEVT, PTIK…IQLH, PSLE…YSLQ, PSIS…RDID, PNIM…YNVN, PNIG…YNLQ, PTIT…YDLS, PSII…RKIF, PHIV…RSFS, PTIA…YEVK, PPII…VNIQ, PSFQ…YDVR, PPII…FNLN, PSVI…FSLT, PSIK…FHLN, PSIE…YFLS, PSVA…FNLN, PTIR…YNLQ, PNMD…GEVS, PHIN…YLVR, PNIA…FILT, PNIK…RRID, PSIA…VDLT, PSIA…VTLH, PVIQ…LNVQ, PVIS…TKLT, PRIR…VSLT, PTFT…GFVY, PPVF…MSLT, and PIIT…VIVQ. Cysteines 451 and 499 form a disulfide. Asn-528, Asn-550, Asn-573, and Asn-620 each carry an N-linked (GlcNAc...) asparagine glycan. An intrachain disulfide couples Cys-541 to Cys-591. Cys-633 and Cys-681 are disulfide-bonded. N-linked (GlcNAc...) asparagine glycosylation occurs at Asn-693. Cys-723 and Cys-772 are joined by a disulfide. Asn-809 carries N-linked (GlcNAc...) asparagine glycosylation. 2 disulfide bridges follow: Cys-814–Cys-867 and Cys-911–Cys-960. N-linked (GlcNAc...) asparagine glycosylation occurs at Asn-970. 2 disulfides stabilise this stretch: Cys-1002–Cys-1051 and Cys-1101–Cys-1150. Asn-1158 carries N-linked (GlcNAc...) asparagine glycosylation. A disulfide bond links Cys-1192 and Cys-1241. Asn-1272 is a glycosylation site (N-linked (GlcNAc...) asparagine). The cysteines at positions 1288 and 1338 are disulfide-linked. A glycan (N-linked (GlcNAc...) asparagine) is linked at Asn-1369. 2 disulfide bridges follow: Cys-1382–Cys-1431 and Cys-1475–Cys-1525. Asn-1552 carries N-linked (GlcNAc...) asparagine glycosylation. Intrachain disulfides connect Cys-1569/Cys-1618, Cys-1663/Cys-1712, Cys-1756/Cys-1805, and Cys-1848/Cys-1898. Asn-1929 carries N-linked (GlcNAc...) asparagine glycosylation. 2 disulfide bridges follow: Cys-1942–Cys-1991 and Cys-2033–Cys-2083. Residues Asn-2112 and Asn-2155 are each glycosylated (N-linked (GlcNAc...) asparagine). 3 disulfides stabilise this stretch: Cys-2125–Cys-2174, Cys-2218–Cys-2269, and Cys-2314–Cys-2363. Residue Asn-2395 is glycosylated (N-linked (GlcNAc...) asparagine). 3 disulfides stabilise this stretch: Cys-2408–Cys-2457, Cys-2501–Cys-2550, and Cys-2597–Cys-2646. Residue Asn-2689 is glycosylated (N-linked (GlcNAc...) asparagine). 2 disulfide bridges follow: Cys-2696-Cys-2745 and Cys-2799-Cys-2848. Residue Asn-2887 is glycosylated (N-linked (GlcNAc...) asparagine). The cysteines at positions 2894 and 2943 are disulfide-linked. The N-linked (GlcNAc...) asparagine glycan is linked to Asn-2973. Disulfide bonds link Cys-2986/Cys-3035, Cys-3081/Cys-3130, Cys-3173/Cys-3224, Cys-3268/Cys-3319, Cys-3364/Cys-3413, and Cys-3457/Cys-3506. N-linked (GlcNAc...) asparagine glycans are attached at residues Asn-3221 and Asn-3300. A glycan (N-linked (GlcNAc...) asparagine) is linked at Asn-3530. 2 disulfides stabilise this stretch: Cys-3550/Cys-3599 and Cys-3643/Cys-3692. Residues Asn-3689 and Asn-3727 are each glycosylated (N-linked (GlcNAc...) asparagine). A disulfide bond links Cys-3734 and Cys-3783. N-linked (GlcNAc...) asparagine glycosylation occurs at Asn-3812. 26 disulfides stabilise this stretch: Cys-3825–Cys-3876, Cys-3918–Cys-3967, Cys-4009–Cys-4058, Cys-4100–Cys-4148, Cys-4190–Cys-4239, Cys-4281–Cys-4328, Cys-4371–Cys-4419, Cys-4461–Cys-4509, Cys-4541–Cys-4578, Cys-4545–Cys-4583, Cys-4556–Cys-4568, Cys-4598–Cys-4635, Cys-4602–Cys-4640, Cys-4613–Cys-4625, Cys-4655–Cys-4692, Cys-4659–Cys-4697, Cys-4670–Cys-4682, Cys-4712–Cys-4749, Cys-4716–Cys-4754, Cys-4727–Cys-4739, Cys-4769–Cys-4806, Cys-4773–Cys-4811, Cys-4784–Cys-4796, Cys-4826–Cys-4863, Cys-4830–Cys-4868, and Cys-4841–Cys-4853. Asn-4029 is a glycosylation site (N-linked (GlcNAc...) asparagine). 2 N-linked (GlcNAc...) asparagine glycosylation sites follow: Asn-4401 and Asn-4491. TSP type-1 domains lie at 4529-4584, 4586-4641, 4643-4698, 4700-4755, 4757-4812, and 4814-4869; these read HGGF…KPCP, DGSW…RPCP, HGAW…RNCP, HGKW…DPCP, HGNW…DMCP, and DGSW…QACP. N-linked (GlcNAc...) asparagine glycosylation is present at Asn-4606. Residues 4871-5093 enclose the Nidogen G2 beta-barrel domain; it reads GPQRARGSVI…SKGDRSNQCP (223 aa). Residues Asn-4894 and Asn-5040 are each glycosylated (N-linked (GlcNAc...) asparagine). The region spanning 5107–5146 is the EGF-like 1; calcium-binding domain; the sequence is DEDECAAGNPCSHSCHNAMGTYYCSCPKGLTIAADGRTCQ. Disulfide bonds link Cys-5111–Cys-5121, Cys-5117–Cys-5130, and Cys-5132–Cys-5145. The EGF-like 2; calcium-binding domain occupies 5147 to 5191; sequence DIDECALGRHTCHAGQDCDNTIGSYRCVVRCGSGFRRTSDGLSCQ. Positions 5192–5229 constitute an EGF-like 3; calcium-binding domain; it reads DINECQESSPCHQRCFNAIGSFHCGCEPGYQLKGRKCM. 3 cysteine pairs are disulfide-bonded: Cys-5196–Cys-5206, Cys-5202–Cys-5215, and Cys-5217–Cys-5228. The 42-residue stretch at 5230–5271 folds into the EGF-like 4; calcium-binding domain; it reads DVNECRQNVCRPDQHCKNTRGGYKCIDLCPNGMTKAENGTCI. An N-linked (GlcNAc...) asparagine glycan is attached at Asn-5267. An EGF-like 5; calcium-binding domain is found at 5272-5307; the sequence is DIDECKDGTHQCRYNQICENTRGSYRCVCPRGYRSQ. 8 cysteine pairs are disulfide-bonded: Cys-5276/Cys-5289, Cys-5283/Cys-5298, Cys-5319/Cys-5330, Cys-5326/Cys-5339, Cys-5341/Cys-5354, Cys-5436/Cys-5446, Cys-5442/Cys-5455, and Cys-5457/Cys-5470. The 41-residue stretch at 5315–5355 folds into the EGF-like 6; calcium-binding domain; that stretch reads DINECEQVPKPCAHQCSNTPGSFKCICPPGQHLLGDGKSCA. Positions 5432–5471 constitute an EGF-like 7; calcium-binding domain; sequence DIDECENTDACQHECKNTFGSYQCICPPGYQLTHNGKTCQ. N-linked (GlcNAc...) asparagine glycosylation is present at Asn-5615.

As to expression, expressed in hair follicles and in the dermis (at protein level). In terms of tissue distribution, expressed in skin fibroblasts and retinal pigment epithelium (RPE) cells.

It is found in the secreted. It localises to the extracellular space. The protein localises to the extracellular matrix. The protein resides in the basement membrane. Its subcellular location is the cytoplasm. It is found in the cell junction. It localises to the cleavage furrow. Functionally, involved in transforming growth factor beta-mediated rearrangement of the podocyte cytoskeleton which includes reduction of F-actin fibers and broadening, flattening and elongation of podocytes. Plays a role in basement membrane organization. May promote cleavage furrow maturation during cytokinesis in preimplantation embryos. May play a role in the architecture of adhesive and flexible epithelial cell junctions. May play a role during myocardial remodeling by imparting an effect on cardiac fibroblast migration. The protein is Hemicentin-1 (HMCN1) of Homo sapiens (Human).